Reading from the N-terminus, the 208-residue chain is Virion protein US10 homolog (208 aa).

Residues 17-61 (ARGAKLSPGQHPRPSHAVRGRTAPGTRSSRRRTCEDGTSGPRDPR) form a disordered region. A zinc finger spans residues 167 to 179 (CAFWCCLAHAATC).

It belongs to the herpesviridae US10 family. In terms of processing, phosphorylated.

It is found in the virion tegument. It localises to the host nucleus matrix. The polypeptide is Virion protein US10 homolog (Homo sapiens (Human)).